Here is a 123-residue protein sequence, read N- to C-terminus: Small ribosomal subunit protein uS13 (123 aa).

The interval 97-123 (PVRGQRTHTNAKTRKGRSKLPVAAKKK) is disordered.

Belongs to the universal ribosomal protein uS13 family. As to quaternary structure, part of the 30S ribosomal subunit. Forms a loose heterodimer with protein S19. Forms two bridges to the 50S subunit in the 70S ribosome.

In terms of biological role, located at the top of the head of the 30S subunit, it contacts several helices of the 16S rRNA. In the 70S ribosome it contacts the 23S rRNA (bridge B1a) and protein L5 of the 50S subunit (bridge B1b), connecting the 2 subunits; these bridges are implicated in subunit movement. Contacts the tRNAs in the A and P-sites. This chain is Small ribosomal subunit protein uS13, found in Ehrlichia chaffeensis (strain ATCC CRL-10679 / Arkansas).